A 262-amino-acid polypeptide reads, in one-letter code: Cytochrome c oxidase subunit 2 (262 aa).

A run of 2 helical transmembrane segments spans residues 31–51 (HIMF…YVII) and 72–92 (IIWT…SFIL). Residues His175, Cys210, Glu212, Cys214, His218, and Met221 each contribute to the Cu cation site. Mg(2+) is bound at residue Glu212.

The protein belongs to the cytochrome c oxidase subunit 2 family. Component of the cytochrome c oxidase (complex IV, CIV), a multisubunit enzyme composed of a catalytic core of 3 subunits and several supernumerary subunits. The complex exists as a monomer or a dimer and forms supercomplexes (SCs) in the inner mitochondrial membrane with ubiquinol-cytochrome c oxidoreductase (cytochrome b-c1 complex, complex III, CIII). Cu cation is required as a cofactor.

It localises to the mitochondrion inner membrane. It catalyses the reaction 4 Fe(II)-[cytochrome c] + O2 + 8 H(+)(in) = 4 Fe(III)-[cytochrome c] + 2 H2O + 4 H(+)(out). Functionally, component of the cytochrome c oxidase, the last enzyme in the mitochondrial electron transport chain which drives oxidative phosphorylation. The respiratory chain contains 3 multisubunit complexes succinate dehydrogenase (complex II, CII), ubiquinol-cytochrome c oxidoreductase (cytochrome b-c1 complex, complex III, CIII) and cytochrome c oxidase (complex IV, CIV), that cooperate to transfer electrons derived from NADH and succinate to molecular oxygen, creating an electrochemical gradient over the inner membrane that drives transmembrane transport and the ATP synthase. Cytochrome c oxidase is the component of the respiratory chain that catalyzes the reduction of oxygen to water. Electrons originating from reduced cytochrome c in the intermembrane space (IMS) are transferred via the dinuclear copper A center (CU(A)) of subunit 2 and heme A of subunit 1 to the active site in subunit 1, a binuclear center (BNC) formed by heme A3 and copper B (CU(B)). The BNC reduces molecular oxygen to 2 water molecules using 4 electrons from cytochrome c in the IMS and 4 protons from the mitochondrial matrix. The polypeptide is Cytochrome c oxidase subunit 2 (COX2) (Candida albicans (strain SC5314 / ATCC MYA-2876) (Yeast)).